The primary structure comprises 80 residues: FXYD domain-containing ion transport regulator 7 (80 aa).

At 1-23 the chain is on the extracellular side; sequence MATPTQTPTKAPEEPDPFYYDYN. Thr-3, Thr-5, and Thr-9 each carry an O-linked (GlcNAc) threonine glycan. The chain crosses the membrane as a helical span at residues 24–46; that stretch reads TVQTVGMTLATILFLLGILIVIS. Topologically, residues 47–80 are cytoplasmic; sequence KKVKCRKADSRSESPTCKSCKSELPSSAPGGGGV. The segment at 54 to 80 is disordered; it reads ADSRSESPTCKSCKSELPSSAPGGGGV. Position 73 is a phosphoserine (Ser-73).

Belongs to the FXYD family. In terms of assembly, regulatory subunit of the sodium/potassium-transporting ATPase which is composed of a catalytic alpha subunit, a non-catalytic beta subunit and a FXYD regulatory unit that modulates the enzymatic activity in a tissue- and isoform-specific way by changing affinities of the Na+/K+-ATPase toward Na(+), K(+) or ATP. Post-translationally, O-glycosylated; required for stabilization and translocation to the plasma membrane.

It localises to the cell membrane. Functionally, associates with and regulates the activity of the sodium/potassium-transporting ATPase (NKA) which catalyzes the hydrolysis of ATP coupled with the exchange of Na(+) and K(+) ions across the plasma membrane. Reduces the apparent affinity for external K(+), an effect that depends on the presence of external Na(+) and voltage. Increases the apparent affinity for intracellular Na(+). The protein is FXYD domain-containing ion transport regulator 7 (FXYD7) of Homo sapiens (Human).